Here is a 598-residue protein sequence, read N- to C-terminus: Aspartate--tRNA(Asp/Asn) ligase (598 aa).

Glu175 contributes to the L-aspartate binding site. The interval Gln199–Lys202 is aspartate. The L-aspartate site is built by Arg221 and His452. Arg221–Glu223 is a binding site for ATP. Residue Glu486 coordinates ATP. Arg493 lines the L-aspartate pocket. Gly538 to Arg541 provides a ligand contact to ATP.

This sequence belongs to the class-II aminoacyl-tRNA synthetase family. Type 1 subfamily. In terms of assembly, homodimer.

It localises to the cytoplasm. The catalysed reaction is tRNA(Asx) + L-aspartate + ATP = L-aspartyl-tRNA(Asx) + AMP + diphosphate. In terms of biological role, aspartyl-tRNA synthetase with relaxed tRNA specificity since it is able to aspartylate not only its cognate tRNA(Asp) but also tRNA(Asn). Reaction proceeds in two steps: L-aspartate is first activated by ATP to form Asp-AMP and then transferred to the acceptor end of tRNA(Asp/Asn). The chain is Aspartate--tRNA(Asp/Asn) ligase from Gluconobacter oxydans (strain 621H) (Gluconobacter suboxydans).